We begin with the raw amino-acid sequence, 132 residues long: Small ribosomal subunit protein uS8 (132 aa).

The protein belongs to the universal ribosomal protein uS8 family. In terms of assembly, part of the 30S ribosomal subunit. Contacts proteins S5 and S12.

One of the primary rRNA binding proteins, it binds directly to 16S rRNA central domain where it helps coordinate assembly of the platform of the 30S subunit. This Limosilactobacillus reuteri (strain DSM 20016) (Lactobacillus reuteri) protein is Small ribosomal subunit protein uS8.